Consider the following 415-residue polypeptide: MSFLKTSDPAVYNAIMQETTRLKETIDLIASENYTSKAVLEAQGSVFTNKYAEGYPGKRYYAGCEYADAVEELAIDRAKTLFHAEHANVQPHSGAQANMAAYFAMVKPGDTIMGLTLSHGGHLTHGSKVNFTGKLYHVIEYGLNAETERIDYDNLEKLAMEHRPRMIVTGASAYPRILDFERFRAICDKVDAKLMVDIAHIAGLVAAGLHPSPVPYADVVTSTSHKTLRGPRGGFILCKEQYAKAIDQAVFPVMQGGPLMQVVAAKAVAFQEAMQPGFVTYQKKTLENTQVMAEELRKLGLRLVSGGTDNHLVLVDLSPIGVNGYDAQLALRRAGIVINRNTVPFAENQTANVPAGIRLGCPAATSRGFGPAEIRQTVGWIGKILKNIGNEDVEKQVLAEVIHLCRKFPVPGIDI.

(6S)-5,6,7,8-tetrahydrofolate-binding positions include L117 and 121-123; that span reads GHL. K226 carries the post-translational modification N6-(pyridoxal phosphate)lysine.

Belongs to the SHMT family. In terms of assembly, homodimer. Pyridoxal 5'-phosphate is required as a cofactor.

It is found in the cytoplasm. It catalyses the reaction (6R)-5,10-methylene-5,6,7,8-tetrahydrofolate + glycine + H2O = (6S)-5,6,7,8-tetrahydrofolate + L-serine. It functions in the pathway one-carbon metabolism; tetrahydrofolate interconversion. The protein operates within amino-acid biosynthesis; glycine biosynthesis; glycine from L-serine: step 1/1. In terms of biological role, catalyzes the reversible interconversion of serine and glycine with tetrahydrofolate (THF) serving as the one-carbon carrier. This reaction serves as the major source of one-carbon groups required for the biosynthesis of purines, thymidylate, methionine, and other important biomolecules. Also exhibits THF-independent aldolase activity toward beta-hydroxyamino acids, producing glycine and aldehydes, via a retro-aldol mechanism. The protein is Serine hydroxymethyltransferase of Dehalococcoides mccartyi (strain ATCC BAA-2100 / JCM 16839 / KCTC 5957 / BAV1).